The sequence spans 234 residues: MVEPSLAGLLGLMQLTDSALPTGAFSHSLGFETYMAAEQLEDRESFSAWLEMFVDQQLTHTDALAVRLVYAAGDFERVEDLDELVTAQALPRQIREGGTTMGRRLLSIGARSYPGEWVRRYQQGVEEERLRGHQATVWGVLARGLDVPEDTAVASHVYAAVISLTQNAVRGIPLGQNTGQAVIRAAQEWVGRAVATSRRLSEEGIAEEVLGAVAPGLEIAQMNHERQRARLFMS.

This sequence belongs to the UreF family. As to quaternary structure, ureD, UreF and UreG form a complex that acts as a GTP-hydrolysis-dependent molecular chaperone, activating the urease apoprotein by helping to assemble the nickel containing metallocenter of UreC. The UreE protein probably delivers the nickel.

Its subcellular location is the cytoplasm. Its function is as follows. Required for maturation of urease via the functional incorporation of the urease nickel metallocenter. This Kocuria rhizophila (strain ATCC 9341 / DSM 348 / NBRC 103217 / DC2201) protein is Urease accessory protein UreF.